The sequence spans 128 residues: Con-Ins F2b (128 aa).

Residues 1–24 (MTTSSYFLLVALGLLLYVCRSSFG) form the signal peptide. Cystine bridges form between C29/C104, C41/C107, C53/C120, and C106/C111. Positions 59-89 (LQGGTGKKRGRASLLRKRRAFLSMLKARAKR) are cleaved as a propeptide — c peptide. At E115 the chain carries 4-carboxyglutamate; partial. The residue at position 127 (S127) is a Serine amide.

Belongs to the insulin family. In terms of assembly, heterodimer of A and B chains; disulfide-linked. As to expression, expressed by the venom gland.

The protein localises to the secreted. This venom insulin facilitates prey capture by rapidly inducing hypoglycemic shock. Intraperitoneal injection of this peptide into zebrafish lowers blood glucose with the same potency than human insulin. In vivo, when applied to water, this peptide reduces overall locomotor activity of zebrafish larvae, observed as a significant decrease in the percentage of time spent swimming and movement frequency. The chain is Con-Ins F2b from Conus floridulus (Cone snail).